Here is a 764-residue protein sequence, read N- to C-terminus: 1,4-alpha-glucan branching enzyme GlgB (764 aa).

Asp-434 (nucleophile) is an active-site residue. Catalysis depends on Glu-487, which acts as the Proton donor.

The protein belongs to the glycosyl hydrolase 13 family. GlgB subfamily. Monomer.

The enzyme catalyses Transfers a segment of a (1-&gt;4)-alpha-D-glucan chain to a primary hydroxy group in a similar glucan chain.. It functions in the pathway glycan biosynthesis; glycogen biosynthesis. In terms of biological role, catalyzes the formation of the alpha-1,6-glucosidic linkages in glycogen by scission of a 1,4-alpha-linked oligosaccharide from growing alpha-1,4-glucan chains and the subsequent attachment of the oligosaccharide to the alpha-1,6 position. The sequence is that of 1,4-alpha-glucan branching enzyme GlgB from Nostoc sp. (strain PCC 7120 / SAG 25.82 / UTEX 2576).